A 256-amino-acid polypeptide reads, in one-letter code: Calsenilin (256 aa).

The disordered stretch occupies residues 1-30 (MQRAKEVMKVSDGSLLGEPGRTPLSKKEGV). The residue at position 14 (S14) is a Phosphoserine. Residue K26 forms a Glycyl lysine isopeptide (Lys-Gly) (interchain with G-Cter in SUMO1) linkage. 2 S-palmitoyl cysteine lipidation sites follow: C45 and C46. Phosphoserine occurs at positions 60 and 63. One can recognise an EF-hand 1; degenerate domain in the interval 67–123 (LELSAVRHQPEGLDQLQAQTKFTKKELQSLYRGFKNECPTGLVDEDTFKLIYSQFFP). Residue K90 forms a Glycyl lysine isopeptide (Lys-Gly) (interchain with G-Cter in SUMO1) linkage. EF-hand domains are found at residues 126–161 (DATT…LLRG), 162–197 (TVHE…IYDM), and 210–245 (APLE…DENI). Residues D175, N177, D179, Y181, E186, D223, N225, D227, and E234 each contribute to the Ca(2+) site. The segment at 243-256 (ENIMSSMQLFENVI) is interaction with KCND2.

It belongs to the recoverin family. Binds to DNA as a homomultimer. Dimerization is induced by binding to calcium. Interacts with the C-terminus of PSEN1 and PSEN2 and with PSEN2 CTF subunit. Associates with KCN1. Component of heteromultimeric potassium channels. Identified in potassium channel complexes containing KCND1, KCND2, KCND3, KCNIP1, KCNIP2, KCNIP3, KCNIP4, DPP6 and DPP10. Interacts with KCND2 and KCND3. Palmitoylated. Palmitoylation enhances association with the plasma membrane. In terms of processing, proteolytically cleaved by caspase-3.

The protein resides in the cytoplasm. Its subcellular location is the cell membrane. The protein localises to the endoplasmic reticulum. It is found in the golgi apparatus. It localises to the nucleus. Its function is as follows. Regulatory subunit of Kv4/D (Shal)-type voltage-gated rapidly inactivating A-type potassium channels, such as KCND2/Kv4.2 and KCND3/Kv4.3. Modulates channel expression at the cell membrane, gating characteristics, inactivation kinetics and rate of recovery from inactivation in a calcium-dependent and isoform-specific manner. Functionally, may play a role in the regulation of PSEN2 proteolytic processing and apoptosis. Together with PSEN2 involved in modulation of amyloid-beta formation. Calcium-dependent transcriptional repressor that binds to the DRE element of genes including PDYN and FOS. Affinity for DNA is reduced upon binding to calcium and enhanced by binding to magnesium. Seems to be involved in nociception. This Bos taurus (Bovine) protein is Calsenilin (KCNIP3).